Reading from the N-terminus, the 382-residue chain is Lipid-A-disaccharide synthase (382 aa).

It belongs to the LpxB family.

The enzyme catalyses 2-N,3-O-bis[(3R)-3-hydroxytetradecanoyl]-alpha-D-glucosaminyl 1-phosphate + UDP-2-N,3-O-bis[(3R)-3-hydroxytetradecanoyl]-alpha-D-glucosamine = lipid A disaccharide (E. coli) + UDP + H(+). The catalysed reaction is a lipid X + a UDP-2-N,3-O-bis[(3R)-3-hydroxyacyl]-alpha-D-glucosamine = a lipid A disaccharide + UDP + H(+). It functions in the pathway glycolipid biosynthesis; lipid IV(A) biosynthesis; lipid IV(A) from (3R)-3-hydroxytetradecanoyl-[acyl-carrier-protein] and UDP-N-acetyl-alpha-D-glucosamine: step 5/6. Its function is as follows. Condensation of UDP-2,3-diacylglucosamine and 2,3-diacylglucosamine-1-phosphate to form lipid A disaccharide, a precursor of lipid A, a phosphorylated glycolipid that anchors the lipopolysaccharide to the outer membrane of the cell. This is Lipid-A-disaccharide synthase from Escherichia coli O127:H6 (strain E2348/69 / EPEC).